The primary structure comprises 1018 residues: Collagen, type I, alpha 1a (1018 aa).

Residues 1–10 (QMSAGYDDKS) are compositionally biased toward basic and acidic residues. Residues 1–991 (QMSAGYDDKS…SGEYWLDPDQ (991 aa)) are disordered. Positions 13-30 (MPVPGPMGPMGPRGPPGS) are enriched in pro residues. Residues 31–58 (PGASGPQGFTGPPGEPGEAGPSGAMGPR) are compositionally biased toward low complexity. Basic and acidic residues predominate over residues 67 to 81 (NGEDGESGKPGRGGE). The span at 126–136 (PRGNDGAAGAA) shows a compositional bias: low complexity. The segment covering 138–151 (PPGPTGPAGPPGFP) has biased composition (pro residues). The span at 152–170 (GGPGAKGDAGAQGGRGPEG) shows a compositional bias: gly residues. Low complexity-rich tracts occupy residues 171-214 (PAGA…AGAP) and 223-261 (SGPQ…APGV). Residues 284–296 (GARGGPGGRGFPG) are compositionally biased toward gly residues. 4 stretches are compositionally biased toward low complexity: residues 370 to 385 (VGAR…PGPK), 424 to 442 (AGPA…PGFQ), 452 to 510 (LPGE…QGMP), and 543 to 558 (RGLT…AGAT). The span at 568 to 577 (GPVGPGGARG) shows a compositional bias: gly residues. Low complexity-rich tracts occupy residues 591–627 (AGFA…AGPT) and 641–663 (PKGA…AGRV). The segment covering 665 to 677 (PPGPSGNPGPPGP) has biased composition (pro residues). Composition is skewed to low complexity over residues 701–746 (EVGA…XXPG) and 775–795 (PGLA…NEGS). Positions 819–829 (APGPPGAPGPV) are enriched in pro residues. The span at 843–862 (PAGPAGSAGPAGPRGPAGAP) shows a compositional bias: low complexity. Over residues 865–876 (RGDKGESGEAGE) the composition is skewed to basic and acidic residues. Residues 889-925 (SGSSGEQGPAGAAGPAGPRGPAGSAGSPGKDGMSGLP) are compositionally biased toward low complexity. A Fibrillar collagen NC1 domain is found at 932–1018 (GPRGGFDLGF…CTSHTGTWGK (87 aa)). Positions 948–959 (KAPDPFRDRDLE) are enriched in basic and acidic residues. Positions 963-973 (TLKSLSQQLEQ) are enriched in polar residues.

Belongs to the fibrillar collagen family.

It localises to the secreted. It is found in the extracellular space. The protein localises to the extracellular matrix. This chain is Collagen, type I, alpha 1a, found in Epinephelus costae (Goldblotch grouper).